We begin with the raw amino-acid sequence, 199 residues long: Probable GTP-binding protein EngB (199 aa).

In terms of domain architecture, EngB-type G spans 22–196; that stretch reads NFSEVAFLGR…EDVIINQTLG (175 aa). GTP is bound by residues 30-37, 57-61, 82-85, 152-155, and 175-177; these read GRSNVGKS, GKTQL, DLPG, TKCD, and VSN. Mg(2+)-binding residues include Ser37 and Thr59.

It belongs to the TRAFAC class TrmE-Era-EngA-EngB-Septin-like GTPase superfamily. EngB GTPase family. It depends on Mg(2+) as a cofactor.

Necessary for normal cell division and for the maintenance of normal septation. This is Probable GTP-binding protein EngB from Campylobacter jejuni subsp. doylei (strain ATCC BAA-1458 / RM4099 / 269.97).